The following is a 635-amino-acid chain: Probable Xaa-Pro aminopeptidase P (635 aa).

Residues D432, D443, E541, and E555 each contribute to the Mn(2+) site.

The protein belongs to the peptidase M24B family. It depends on Mn(2+) as a cofactor.

The catalysed reaction is Release of any N-terminal amino acid, including proline, that is linked to proline, even from a dipeptide or tripeptide.. Its function is as follows. Catalyzes the removal of a penultimate prolyl residue from the N-termini of peptides. This is Probable Xaa-Pro aminopeptidase P (AMPP) from Arthroderma gypseum (strain ATCC MYA-4604 / CBS 118893) (Microsporum gypseum).